Here is a 942-residue protein sequence, read N- to C-terminus: UvrABC system protein A (942 aa).

Residue 31–38 (GLSGSGKS) coordinates ATP. A C4-type zinc finger spans residues 253–280 (CSECGYSLPELEPRLFSFNNPAGACPTC). ABC transporter domains lie at 310–586 (WDRR…EASI) and 606–936 (YDAN…RFLT). 639–646 (GVSGSGKS) contributes to the ATP binding site. The C4-type zinc finger occupies 739 to 765 (CEACQGDGVIKVEMHFLPDVYVPCDHC).

This sequence belongs to the ABC transporter superfamily. UvrA family. In terms of assembly, forms a heterotetramer with UvrB during the search for lesions.

Its subcellular location is the cytoplasm. In terms of biological role, the UvrABC repair system catalyzes the recognition and processing of DNA lesions. UvrA is an ATPase and a DNA-binding protein. A damage recognition complex composed of 2 UvrA and 2 UvrB subunits scans DNA for abnormalities. When the presence of a lesion has been verified by UvrB, the UvrA molecules dissociate. The sequence is that of UvrABC system protein A from Haemophilus ducreyi (strain 35000HP / ATCC 700724).